A 203-amino-acid polypeptide reads, in one-letter code: MATKKKVLLKVIILGDSGVGKTSLMNQYVNKKFSNQYKATIGADFLTKELMVDDRVVTMQIWDTAGQERFQSLGVAFYRGADCCVLCYDVNVAKTFENLDSWRDEFLIQAGPRDPDNFPFVVLGNKIDLENQRVVSQKRAASWCQSKGNIPYFETSAKEAINVEQAFQTIARNAIKLEDGLVFPIPTNIQVIPEPQPAKSGCC.

GTP-binding positions include Gly15–Thr22, Ser34–Thr40, Asp63–Gln67, Asn125–Asp128, and Ala157–Lys158. The short motif at Tyr37–Phe45 is the Effector region element. S-geranylgeranyl cysteine attachment occurs at residues Cys202 and Cys203.

It belongs to the small GTPase superfamily. Rab family.

The protein localises to the late endosome membrane. It localises to the lysosome membrane. The protein resides in the cytoplasmic vesicle. Its subcellular location is the autophagosome membrane. It is found in the lipid droplet. The enzyme catalyses GTP + H2O = GDP + phosphate + H(+). Small GTPase which cycles between active GTP-bound and inactive GDP-bound states. In its active state, binds to a variety of effector proteins playing a key role in the regulation of endo-lysosomal trafficking. Governs early-to-late endosomal maturation, microtubule minus-end as well as plus-end directed endosomal migration and positioning, and endosome-lysosome transport through different protein-protein interaction cascades. Involved in lipophagy, a cytosolic lipase-independent autophagic pathway. The chain is Ras-related protein Rab-7a (rab7A) from Dictyostelium discoideum (Social amoeba).